A 546-amino-acid polypeptide reads, in one-letter code: Chaperonin GroEL (546 aa).

ATP contacts are provided by residues 29–32, 86–90, glycine 413, 476–478, and aspartate 492; these read TLGP, DGTTT, and NAA. The interval 521–546 is disordered; that stretch reads RPDESGNDAGAGAQGMDPSMMGGGMM.

Belongs to the chaperonin (HSP60) family. Forms a cylinder of 14 subunits composed of two heptameric rings stacked back-to-back. Interacts with the co-chaperonin GroES.

It is found in the cytoplasm. The catalysed reaction is ATP + H2O + a folded polypeptide = ADP + phosphate + an unfolded polypeptide.. In terms of biological role, together with its co-chaperonin GroES, plays an essential role in assisting protein folding. The GroEL-GroES system forms a nano-cage that allows encapsulation of the non-native substrate proteins and provides a physical environment optimized to promote and accelerate protein folding. In Tetragenococcus halophilus (Pediococcus halophilus), this protein is Chaperonin GroEL.